An 88-amino-acid chain; its full sequence is Large ribosomal subunit protein bL27 (88 aa).

A disordered region spans residues 1–21 (MAHKKGQGSTQNNRDSAGRRL).

This sequence belongs to the bacterial ribosomal protein bL27 family.

The chain is Large ribosomal subunit protein bL27 from Helicobacter pylori (strain P12).